The chain runs to 957 residues: MDLKKTVNLLDTPFPMRGDLARREPGWLAQWQAQQRYQKLRKIAAGRPKFILHDGPPYANGDIHIGHAVNKILKDIIVRSKTQAGFDAPYVPGWDCHGLPIEHQIEKLVKGDKKAIEAAPSIHARITEYRKANGLDAKATDLPASFIRELCREYAGLQVERQKKDFIRLGVLGEWDNPYRTMSFRSEADEIRALGKLYQQGYLFKGLKPVYWCFDCGSALAEAEVEYQDKTSPTIDVAFASAEPEKLAAAFGLSALPAGKTASAVIWTTTPWTIPANQALNVHPDFDYGLYDTEKGLLILAADLAKGALERFGLTGVEVARCKGQALDRLTFRHPFYDRVSPVYVGDYVTLDAGTGIVHSAPAYGLEDFDSCRKNGMPNDAILNPVTSDGTYVDSLPFFGGLHIWKANPLIVEKLAEVGALMHTSPLSHSYPHCWRHKTPVVYRATTQWFVGMDREVAGSTLRQRALKGVDDTAFFPAWGQARLHAMIANRPDWCVSRQRNWGVPIPFFLDKQTGEPHPRTPELLEAVARKVEEQGINAWFELDPAELLGEDAARFDKMKDTLDVWFDSGTTHFHVLRGTHAEQLAYPADLYLEGSDQHRGWFHSSLLTGCALDGRAPYNQLLTHGFVVDGQGRKMSKSVGNVIAPQKINDSLGADILRLWVASTDYSGELAISDTILKGTTDSYRRLRNTIRFLLANLSDFNPATDALPVSELTELDRYALVLAQRLHAGVAEDCYPRYAFHTAMQAIVGYCTDDLGAFWLDIIKDRLYTTKADSKARRSAQTALWHVTRSLLSLLAPVLCFTADEAWQALTGEAEDSPVYHTWHELPVVADAEALAARWDVLRALRAQINKDIETLREAGAVGSSLQAEVDIEADAGLYPLLNALGDELKFVLIVSRVGVVPGPETRIRVSASGEQKCERCWHYHPTVGENAEAPTLCARCYDNIFGQGESRSYA.

Residues 57–67 (PYANGDIHIGH) carry the 'HIGH' region motif. Glu594 is an L-isoleucyl-5'-AMP binding site. The 'KMSKS' region signature appears at 635-639 (KMSKS). Residue Lys638 participates in ATP binding. 4 residues coordinate Zn(2+): Cys920, Cys923, Cys940, and Cys943.

Belongs to the class-I aminoacyl-tRNA synthetase family. IleS type 1 subfamily. As to quaternary structure, monomer. Requires Zn(2+) as cofactor.

It is found in the cytoplasm. The enzyme catalyses tRNA(Ile) + L-isoleucine + ATP = L-isoleucyl-tRNA(Ile) + AMP + diphosphate. Catalyzes the attachment of isoleucine to tRNA(Ile). As IleRS can inadvertently accommodate and process structurally similar amino acids such as valine, to avoid such errors it has two additional distinct tRNA(Ile)-dependent editing activities. One activity is designated as 'pretransfer' editing and involves the hydrolysis of activated Val-AMP. The other activity is designated 'posttransfer' editing and involves deacylation of mischarged Val-tRNA(Ile). The polypeptide is Isoleucine--tRNA ligase (Laribacter hongkongensis (strain HLHK9)).